Reading from the N-terminus, the 347-residue chain is Lipopolysaccharide core heptosyltransferase OpsX (347 aa).

This sequence belongs to the glycosyltransferase 9 family.

The protein operates within bacterial outer membrane biogenesis; LPS core biosynthesis. Catalyzes heptose transfer to the lipopolysaccharide core. It transfers the first L-glycero-D-manno-heptose to the phosphorylated 3-deoxy-alpha-D-manno-octulosonic acid (Kdo-P) of the inner core. The protein is Lipopolysaccharide core heptosyltransferase OpsX of Haemophilus influenzae (strain ATCC 51907 / DSM 11121 / KW20 / Rd).